Reading from the N-terminus, the 74-residue chain is Small integral membrane protein 15 (74 aa).

The chain crosses the membrane as a helical span at residues 20 to 40; sequence YGFLTTVILALTPLFLASAVL. A coiled-coil region spans residues 42–74; sequence WKLAKMIEAREKEQKKKQKRQENIAKAKRLKKD. Residues 55–66 show a composition bias toward basic and acidic residues; the sequence is QKKKQKRQENIA. A disordered region spans residues 55–74; the sequence is QKKKQKRQENIAKAKRLKKD.

Belongs to the SMIM15 family.

It is found in the membrane. The chain is Small integral membrane protein 15 (SMIM15) from Homo sapiens (Human).